The primary structure comprises 742 residues: Potassium transporter 19 (742 aa).

Residues 1-46 are Cytoplasmic-facing; it reads MSVQEDGAARPEPDVLRRHDSLYGDAEKVSNNKRHGAGGSWARTLQ. Residues 47 to 67 form a helical membrane-spanning segment; that stretch reads LAFQSIGVVYGDVGTSPLYVY. Residues 68-83 are Extracellular-facing; that stretch reads SSTFPNGIKHPDDLVG. Residues 84-104 traverse the membrane as a helical segment; it reads VLSLILYTLILIPMVKYVFIV. Topologically, residues 105 to 170 are cytoplasmic; sequence LYANDNGDGG…QKLESSNAAK (66 aa). A helical membrane pass occupies residues 171–191; the sequence is IALFTITILGTSMVMGDGTLT. At 192–206 the chain is on the extracellular side; sequence PAISVLSAVSGIREK. Residues 207–227 traverse the membrane as a helical segment; the sequence is APNLTQSQVVWISVAILFVLF. Residues 228–236 lie on the Cytoplasmic side of the membrane; sequence SMQRFGTDK. Residues 237-257 traverse the membrane as a helical segment; the sequence is VGYTFAPVISVWFLLIAGIGM. Topologically, residues 258–287 are extracellular; it reads YNLTVHEITILRAFNPKYIVDYFRRNGKEA. Asn259 carries an N-linked (GlcNAc...) asparagine glycan. Residues 288–308 traverse the membrane as a helical segment; sequence WVSLGGVVLCITGTEAMFADL. Over 309-317 the chain is Cytoplasmic; that stretch reads GHFNIRAIQ. Residues 318–338 traverse the membrane as a helical segment; the sequence is LSFTCVLFPSVALCYMGQAAY. Over 339-352 the chain is Extracellular; that stretch reads LRKFPENVGDTFYR. The helical transmembrane segment at 353-373 threads the bilayer; that stretch reads SIPAPLFWPVFVVAIMGAIIA. At 374–409 the chain is on the cytoplasmic side; the sequence is SQAMLSGAFAILSKALSLGCFPRVEVVHTSNKYEGQ. A helical transmembrane segment spans residues 410–430; that stretch reads VYIPEVNFLIGAASVAVTLAF. Over 431–441 the chain is Extracellular; the sequence is QTTANIGNAYG. Residues 442–462 traverse the membrane as a helical segment; that stretch reads ICVVTVFSITTHLMTVVMLLI. At 463–468 the chain is on the cytoplasmic side; the sequence is WKVRLP. Residues 469–489 form a helical membrane-spanning segment; it reads FIAAFYAAFGLAEFLYLSSIL. The Extracellular portion of the chain corresponds to 490–495; it reads SKFAEG. Residues 496–516 traverse the membrane as a helical segment; it reads GYLPFCFSLVLMALMATWHYV. The Cytoplasmic segment spans residues 517-742; the sequence is HVKRYWYELD…LLKVGITYEI (226 aa).

This sequence belongs to the HAK/KUP transporter (TC 2.A.72.3) family.

It localises to the membrane. Functionally, high-affinity potassium transporter. The polypeptide is Potassium transporter 19 (HAK19) (Oryza sativa subsp. japonica (Rice)).